We begin with the raw amino-acid sequence, 393 residues long: Probable acetyl-CoA acyltransferase (393 aa).

Catalysis depends on cysteine 88, which acts as the Acyl-thioester intermediate. Active-site proton acceptor residues include histidine 349 and cysteine 378.

The protein belongs to the thiolase-like superfamily. Thiolase family.

Its subcellular location is the cytoplasm. The enzyme catalyses 2 acetyl-CoA = acetoacetyl-CoA + CoA. In Staphylococcus aureus (strain COL), this protein is Probable acetyl-CoA acyltransferase.